A 929-amino-acid chain; its full sequence is Chaperone protein ClpC1, chloroplastic (929 aa).

A chloroplast-targeting transit peptide spans Met-1–Met-38. The region spanning Phe-95 to Glu-237 is the Clp R domain. Repeat regions lie at residues Phe-98–Gly-163 and Phe-173–Glu-237. The tract at residues Leu-257–Pro-504 is i. An ATP-binding site is contributed by Gly-302–Thr-309. Residues Glu-511–Glu-546 enclose the UVR domain. Positions Ala-552–Val-571 are disordered. Residues Lys-553–Ser-562 are compositionally biased toward basic and acidic residues. The II stretch occupies residues Val-571–Ser-762. Gly-645–Ser-652 contacts ATP. Positions Leu-908–Leu-919 are enriched in polar residues. Residues Leu-908–Ala-929 are disordered. A compositionally biased stretch (acidic residues) spans Glu-920–Ala-929.

This sequence belongs to the ClpA/ClpB family. ClpC subfamily. In terms of assembly, homodimer. May form hexamer and interact with Clp core. Interacts (via N-terminus) with CLPS1. Interacts with CLPF. As to expression, highly expressed in rosette leaves. Expressed in roots, stems and inflorescences. Expressed in photosynthetic green tissues with high levels in young, developing leaf tissues.

Its subcellular location is the plastid. It localises to the chloroplast stroma. The protein resides in the chloroplast membrane. Its function is as follows. Molecular chaperone that hydrolyzes ATP and is associated with the chloroplast protein import apparatus. May function as the motor for chloroplast protein translocation, as translocation requires ATP hydrolysis in the stroma. May interact with a ClpP-like protease involved in degradation of denatured proteins in the chloroplast. Involved in the regulation of chlorophyll b biosynthesis through the destabilization of chlorophyllide a oxygenase (CAO) protein in response to the accumulation of chlorophyll b. Involved in leaf iron homeostasis. The polypeptide is Chaperone protein ClpC1, chloroplastic (Arabidopsis thaliana (Mouse-ear cress)).